We begin with the raw amino-acid sequence, 149 residues long: Nucleoside diphosphate kinase (149 aa).

Residues Lys9, Phe57, Arg85, Thr91, Arg102, and Asn112 each coordinate ATP. The active-site Pros-phosphohistidine intermediate is the His115.

The protein belongs to the NDK family. As to quaternary structure, homotetramer. Mg(2+) is required as a cofactor.

The protein localises to the cytoplasm. The enzyme catalyses a 2'-deoxyribonucleoside 5'-diphosphate + ATP = a 2'-deoxyribonucleoside 5'-triphosphate + ADP. The catalysed reaction is a ribonucleoside 5'-diphosphate + ATP = a ribonucleoside 5'-triphosphate + ADP. Major role in the synthesis of nucleoside triphosphates other than ATP. The ATP gamma phosphate is transferred to the NDP beta phosphate via a ping-pong mechanism, using a phosphorylated active-site intermediate. The sequence is that of Nucleoside diphosphate kinase from Desulfitobacterium hafniense (strain DSM 10664 / DCB-2).